Consider the following 337-residue polypeptide: Deoxyhypusine hydroxylase (337 aa).

2 HEAT-like PBS-type repeats span residues 73–99 (LKHELAYCLGQTGNTAAVKPLRQVLSD) and 106–132 (CRHEAAEALGALGWADNLDILREYRDR). 4 residues coordinate Fe cation: His75, Glu76, His108, and Glu109. Residues 156 to 165 (AERQKEKLRP) show a composition bias toward basic and acidic residues. Residues 156-183 (AERQKEKLRPSDFASIDPAPPMPESDKE) are disordered. HEAT-like PBS-type repeat units lie at residues 202 to 235 (SRYRAMFALRDLASPPDLPTATPAVLALAKGLSD), 240 to 266 (FRHEIAFVFGQLSHPASIPALTEALSN), and 273 to 300 (VRHEAAEALGSLGEKDGVEDTLRKFLHD). Fe cation is bound by residues His242, Glu243, His275, and Glu276.

It belongs to the deoxyhypusine hydroxylase family. Fe(2+) is required as a cofactor.

The protein localises to the cytoplasm. It is found in the nucleus. The enzyme catalyses [eIF5A protein]-deoxyhypusine + AH2 + O2 = [eIF5A protein]-hypusine + A + H2O. Its pathway is protein modification; eIF5A hypusination. Functionally, catalyzes the hydroxylation of the N(6)-(4-aminobutyl)-L-lysine intermediate to form hypusine, an essential post-translational modification only found in mature eIF-5A factor. The chain is Deoxyhypusine hydroxylase from Gibberella zeae (strain ATCC MYA-4620 / CBS 123657 / FGSC 9075 / NRRL 31084 / PH-1) (Wheat head blight fungus).